The chain runs to 173 residues: MPKTKKVDRETLPYRPCVGLMILNGEGLVWVGHRIAEPDSEFAGTTQLWQMPQGGIDKGEEPLQAAERELYEETGMRSVSLLAEAPDWINYDLPDHLVGIAFKGRYRGQMQKWFAFRFHGDGSEIQINPPPGGHTAEFDKWSWRPMQDLPDLIVPFKRKVYEEVVAAFSHLAR.

One can recognise a Nudix hydrolase domain in the interval 13–166 (PYRPCVGLMI…KRKVYEEVVA (154 aa)). Residues 54-75 (GGIDKGEEPLQAAERELYEETG) carry the Nudix box motif.

It belongs to the Nudix hydrolase family. RppH subfamily. The cofactor is a divalent metal cation.

Functionally, accelerates the degradation of transcripts by removing pyrophosphate from the 5'-end of triphosphorylated RNA, leading to a more labile monophosphorylated state that can stimulate subsequent ribonuclease cleavage. This chain is RNA pyrophosphohydrolase, found in Mesorhizobium japonicum (strain LMG 29417 / CECT 9101 / MAFF 303099) (Mesorhizobium loti (strain MAFF 303099)).